A 319-amino-acid polypeptide reads, in one-letter code: Acetyl-coenzyme A carboxylase carboxyl transferase subunit alpha (319 aa).

One can recognise a CoA carboxyltransferase C-terminal domain in the interval 35–296 (NIDEEVQRLR…KTQLLADLED (262 aa)).

The protein belongs to the AccA family. As to quaternary structure, acetyl-CoA carboxylase is a heterohexamer composed of biotin carboxyl carrier protein (AccB), biotin carboxylase (AccC) and two subunits each of ACCase subunit alpha (AccA) and ACCase subunit beta (AccD).

The protein localises to the cytoplasm. It carries out the reaction N(6)-carboxybiotinyl-L-lysyl-[protein] + acetyl-CoA = N(6)-biotinyl-L-lysyl-[protein] + malonyl-CoA. Its pathway is lipid metabolism; malonyl-CoA biosynthesis; malonyl-CoA from acetyl-CoA: step 1/1. In terms of biological role, component of the acetyl coenzyme A carboxylase (ACC) complex. First, biotin carboxylase catalyzes the carboxylation of biotin on its carrier protein (BCCP) and then the CO(2) group is transferred by the carboxyltransferase to acetyl-CoA to form malonyl-CoA. The sequence is that of Acetyl-coenzyme A carboxylase carboxyl transferase subunit alpha from Edwardsiella ictaluri (strain 93-146).